Reading from the N-terminus, the 293-residue chain is Urease accessory protein UreD (293 aa).

The segment at 1-22 (MAVAQQAWSPGADPAPSAAPVS) is disordered. Residues 7-22 (AWSPGADPAPSAAPVS) show a composition bias toward low complexity.

Belongs to the UreD family. In terms of assembly, ureD, UreF and UreG form a complex that acts as a GTP-hydrolysis-dependent molecular chaperone, activating the urease apoprotein by helping to assemble the nickel containing metallocenter of UreC. The UreE protein probably delivers the nickel.

Its subcellular location is the cytoplasm. Required for maturation of urease via the functional incorporation of the urease nickel metallocenter. The polypeptide is Urease accessory protein UreD (Alkalilimnicola ehrlichii (strain ATCC BAA-1101 / DSM 17681 / MLHE-1)).